A 190-amino-acid polypeptide reads, in one-letter code: dCTP deaminase, dUMP-forming (190 aa).

DCTP contacts are provided by residues 101–106, Asp-119, 127–129, Gln-148, Tyr-162, and Gln-174; these read KSSLGR and TLE. Residue Glu-129 is the Proton donor/acceptor of the active site. The segment at 163–190 is disordered; that stretch reads GSSQVGSKYQGQRGPTPSKSYQNFVKSN.

The protein belongs to the dCTP deaminase family. In terms of assembly, homotrimer.

It carries out the reaction dCTP + 2 H2O = dUMP + NH4(+) + diphosphate. The protein operates within pyrimidine metabolism; dUMP biosynthesis; dUMP from dCTP: step 1/1. Bifunctional enzyme that catalyzes both the deamination of dCTP to dUTP and the hydrolysis of dUTP to dUMP without releasing the toxic dUTP intermediate. The sequence is that of dCTP deaminase, dUMP-forming from Mycolicibacterium gilvum (strain PYR-GCK) (Mycobacterium gilvum (strain PYR-GCK)).